Here is a 427-residue protein sequence, read N- to C-terminus: Putative ABC transporter substrate-binding protein YesO (427 aa).

Belongs to the bacterial solute-binding protein 1 family.

In terms of biological role, may play a role in the degradation of type I rhamnogalacturonan derived from plant cell walls. This is Putative ABC transporter substrate-binding protein YesO (yesO) from Bacillus subtilis (strain 168).